Reading from the N-terminus, the 155-residue chain is Xanthine-guanine phosphoribosyltransferase (155 aa).

5-phospho-alpha-D-ribose 1-diphosphate is bound by residues 37 to 38 (RG) and 91 to 99 (DDLVDTGNT). Aspartate 92 provides a ligand contact to Mg(2+). Residues aspartate 95 and isoleucine 138 each coordinate guanine. Residues aspartate 95 and isoleucine 138 each contribute to the xanthine site. GMP contacts are provided by residues 95-99 (DTGNT) and 137-138 (WI).

The protein belongs to the purine/pyrimidine phosphoribosyltransferase family. XGPT subfamily. In terms of assembly, homotetramer. Mg(2+) is required as a cofactor.

Its subcellular location is the cell inner membrane. It catalyses the reaction GMP + diphosphate = guanine + 5-phospho-alpha-D-ribose 1-diphosphate. The catalysed reaction is XMP + diphosphate = xanthine + 5-phospho-alpha-D-ribose 1-diphosphate. The enzyme catalyses IMP + diphosphate = hypoxanthine + 5-phospho-alpha-D-ribose 1-diphosphate. It participates in purine metabolism; GMP biosynthesis via salvage pathway; GMP from guanine: step 1/1. The protein operates within purine metabolism; XMP biosynthesis via salvage pathway; XMP from xanthine: step 1/1. Acts on guanine, xanthine and to a lesser extent hypoxanthine. Its function is as follows. Purine salvage pathway enzyme that catalyzes the transfer of the ribosyl-5-phosphate group from 5-phospho-alpha-D-ribose 1-diphosphate (PRPP) to the N9 position of the 6-oxopurines guanine and xanthine to form the corresponding ribonucleotides GMP (guanosine 5'-monophosphate) and XMP (xanthosine 5'-monophosphate), with the release of PPi. To a lesser extent, also acts on hypoxanthine. The polypeptide is Xanthine-guanine phosphoribosyltransferase (Haemophilus influenzae (strain ATCC 51907 / DSM 11121 / KW20 / Rd)).